The primary structure comprises 1642 residues: MERMALYLVAALLIGFPGSSHGALYTLITPAVLRTDTEEQILVEAHGDSTPKQLDIFVHDFPRKQKTLFQTRVDMNPAGGMLVTPTIEIPAKEVSTDSRQNQYVVVQVTGPQVRLEKVVLLSYQSSFLFIQTDKGIYTPGSPVLYRVFSMDHNTSKMNKTVIVEFQTPEGILVSSNSVDLNFFWPYNLPDLVSLGTWRIVAKYEHSPENYTAYFDVRKYVLPSFEVRLQPSEKFFYIDGNENFHVSITARYLYGEEVEGVAFVLFGVKIDDAKKSIPDSLTRIPIIDGDGKATLKRDTFRSRFPNLNELVGHTLYASVTVMTESGSDMVVTEQSGIHIVASPYQIHFTKTPKYFKPGMPYELTVYVTNPDGSPAAHVPVVSEAFHSMGTTLSDGTAKLILNIPLNAQSLPITVRTNHGDLPRERQATKSMTAIAYQTQGGSGNYLHVAITSTEIKPGDNLPVNFNVKGNANSLKQIKYFTYLILNKGKIFKVGRQPRRDGQNLVTMNLHITPDLIPSFRFVAYYQVGNNEIVADSVWVDVKDTCMGTLVVKGDNLIQMPGAAMKIKLEGDPGARVGLVAVDKAVYVLNDKYKISQAKIWDTIEKSDFGCTAGSGQNNLGVFEDAGLALTTSTNLNTKQRSAAKCPQPANRRRRSSVLLLDSNASKAAEFQDQDLRKCCEDVMHENPMGYTCEKRAKYIQEGDACKAAFLECCRYIKGVRDENQRESELFLARDDNEDGFIADSDIISRSDFPKSWLWLTKDLTEEPNSQGISSKTMSFYLRDSITTWVVLAVSFTPTKGICVAEPYEIRVMKVFFIDLQMPYSVVKNEQVEIRAILHNYVNEDIYVRVELLYNPAFCSASTKGQRYRQQFPIKALSSRAVPFVIVPLEQGLHDVEIKASVQEALWSDGVRKKLKVVPEGVQKSIVTIVKLDPRAKGVGGTQLEVIKARKLDDRVPDTEIETKIIIQGDPVAQIIENSIDGSKLNHLIITPSGCGEQNMIRMAAPVIATYYLDTTEQWETLGINRRTEAVNQIVTGYAQQMVYKKADHSYAAFTNRASSSWLTAYVVKVFAMAAKMVAGISHEIICGGVRWLILNRQQPDGAFKENAPVLSGTMQGGIQGAEEEVYLTAFILVALLESKTICNDYVNSLDSSIKKATNYLLKKYEKLQRPYTTALTAYALAAADQLNDDRVLMAASTGRDHWEEYNAHTHNIEGTSYALLALLKMKKFDQTGPIVRWLTDQNFYGETYGQTQATVMAFQALAEYEIQMPTHKDLNLDITIELPDREVPIRYRINYENALLARTVETKLNQDITVTASGDGKATMTILTFYNAQLQEKANVCNKFHLNVSVENIHLNAMGAKGALMLKICTRYLGEVDSTMTIIDISMLTGFLPDAEDLTRLSKGVDRYISRYEVDNNMAQKVAVIIYLNKVSHSEDECLHFKILKHFEVGFIQPGSVKVYSYYNLDEKCTKFYHPDKGTGLLNKICIGNVCRCAGETCSSLNHQERIDVPLQIEKACETNVDYVYKTKLLRIEEQDGNDIYVMDVLEVIKQGTDENPRAKTHQYISQRKCQEALNLKVNDDYLIWGSRSDLLPTKDKISYIITKNTWIERWPHEDECQEEEFQKLCDDFAQFSYTLTEFGCPT.

An N-terminal signal peptide occupies residues 1–22; it reads MERMALYLVAALLIGFPGSSHG. Residues Asn153, Asn158, and Asn209 are each glycosylated (N-linked (GlcNAc...) asparagine). Mg(2+)-binding residues include Pro516, Asp539, Val540, and Asp542. 12 cysteine pairs are disulfide-bonded: Cys544-Cys801, Cys609-Cys644, Cys677-Cys704, Cys678-Cys711, Cys691-Cys712, Cys857-Cys1492, Cys1340-Cys1468, Cys1368-Cys1437, Cys1485-Cys1490, Cys1497-Cys1569, Cys1516-Cys1640, and Cys1616-Cys1625. Residues 650–732 constitute a propeptide that is removed on maturation; it reads RRRRSSVLLL…QRESELFLAR (83 aa). The segment at 654–732 is C3a-like domain; the sequence is SSVLLLDSNA…QRESELFLAR (79 aa). Residues 677–712 enclose the Anaphylatoxin-like domain; sequence CCEDVMHENPMGYTCEKRAKYIQEGDACKAAFLECC. Residues 736-747 form a factor B binding site region; that stretch reads EDGFIADSDIIS. Residues 985–1263 constitute a propeptide that is removed on maturation; the sequence is HLIITPSGCG…VMAFQALAEY (279 aa). Residues 985–1263 form a C3d-like domain region; it reads HLIITPSGCG…VMAFQALAEY (279 aa). A cross-link (isoglutamyl cysteine thioester (Cys-Gln)) is located at residues 993–996; sequence CGEQ. A factor H binding site region spans residues 1190–1253; the sequence is VLMAASTGRD…GETYGQTQAT (64 aa). Asn1346 is a glycosylation site (N-linked (GlcNAc...) asparagine). The 144-residue stretch at 1497 to 1640 folds into the NTR domain; sequence CSSLNHQERI…FSYTLTEFGC (144 aa).

It belongs to the venom complement C3 homolog family. Heterotrimer of alpha, beta and gamma chains; disulfide-linked. Is active with factor B in the presence of factor D. In terms of processing, first processed by the removal of 4 Arg residues by furin-type protease, forming two chains, alpha and gamma/beta precursor, linked by a disulfide bond. Probably, the cobrin cleaves the C3a-like domain and then the C3d-like domain, generating the mature cobra venom factor (CVF). This mature CVF is composed of three chains: alpha, gamma and beta. Post-translationally, contains 3 N-linked oligosaccharide chains, two in the alpha-chain and one in the beta-chain. Glycosylation is not required for the biological activity. However, it contributes to the immunogenicity of CVF. The carbohydrate content is 7.4. The major oligosaccharide is a symmetric fucosylated biantennary complex-type chain with an unusual alpha-galactosylated Le(x) structure at its non-reducing end. Expressed by the venom gland.

It localises to the secreted. Complement-activating protein in cobra venom. It is a structural and functional analog of complement component C3b, the activated form of C3. It binds factor B (CFB), which is subsequently cleaved by factor D (CFD) to form the bimolecular complex CVF/Bb. CVF/Bb is a C3/C5 convertase that cleaves both complement components C3 and C5. Structurally, it resembles the C3b degradation product C3c, which is not able to form a C3/C5 convertase. Unlike C3b/Bb, CVF/Bb is a stable complex and completely resistant to the actions of complement regulatory factors H (CFH) and I (CFI). Therefore, CVF continuously activates complement resulting in the depletion of complement activity. The chain is Cobra venom factor from Naja kaouthia (Monocled cobra).